Here is a 348-residue protein sequence, read N- to C-terminus: Heat-inducible transcription repressor HrcA (348 aa).

Belongs to the HrcA family.

Functionally, negative regulator of class I heat shock genes (grpE-dnaK-dnaJ and groELS operons). Prevents heat-shock induction of these operons. This chain is Heat-inducible transcription repressor HrcA, found in Lacticaseibacillus casei (strain BL23) (Lactobacillus casei).